The chain runs to 375 residues: Mitogen-activated protein kinase 4a (375 aa).

The 287-residue stretch at 39–325 (KPPLRPIGRG…VEAALAHPYL (287 aa)) folds into the Protein kinase domain. ATP is bound by residues 45–53 (IGRGAYGIV) and lysine 68. Catalysis depends on aspartate 165, which acts as the Proton acceptor. Residue threonine 197 is modified to Phosphothreonine. Residues 197-199 (TEY) carry the TXY motif. Position 199 is a phosphotyrosine (tyrosine 199).

It belongs to the protein kinase superfamily. CMGC Ser/Thr protein kinase family. MAP kinase subfamily. Mg(2+) serves as cofactor. In terms of processing, dually phosphorylated on Thr-197 and Tyr-199, which activates the enzyme. Phosphorylated in response to pathogen-associated molecular pattern (PAMP) chitin and in response to necrotrophic fungus B.cinerea spores. Not phosphorylated in response to osmotic stress. Expressed strongly in the apical cells of caulonemal air filaments and rhizoids in fully developed plants and less strongly, but readily detectable in filamentous protonemal tissue at the edge of the plant consisting of both chloronema and caulonema. When filamentous growth of protonema is promoted, the expression is strongest in newly formed apical tip cells of protonemal tissue.

It localises to the cytoplasm. The protein localises to the nucleus. It catalyses the reaction L-seryl-[protein] + ATP = O-phospho-L-seryl-[protein] + ADP + H(+). It carries out the reaction L-threonyl-[protein] + ATP = O-phospho-L-threonyl-[protein] + ADP + H(+). With respect to regulation, activated by threonine and tyrosine phosphorylation. Activated in response to bacterial and fungal pathogen-associated molecular patterns (PAMPs) including chitin, chitosan and peptidyl glycans (PGNs). Activation in response to chitin requires the CERK1, MEKK1a/b, MKK1a/b/c and MPK4a/b signaling pathway. Activated in response to necrotrophic fungus B.cinerea spores. Not activated in response to osmotic stress. In terms of biological role, the CERK1, MEKK1a/b, MKK1a/b/c and MPK4a/b proteins are involved in pathogen defense. The pathway induces rapid growth inhibition, cell wall depositions and accumulation of defense-related transcripts. This protein is required for innate immunity triggered by pathogen-associated molecular patterns (PAMPs). Involved in resistance to necrotrophic fungi B.cinerea and A.brassicicola. Involved in the transduction of signals from chitosan perception to the activation of defense genes. The chain is Mitogen-activated protein kinase 4a (MPK4a) from Physcomitrium patens (Spreading-leaved earth moss).